The following is a 624-amino-acid chain: ATP-dependent RNA helicase MRH4, mitochondrial (624 aa).

The N-terminal 43 residues, 1–43 (MSPVASTCLLCEMRTVVWGWQPAVPQPWHFVRFASSARLARRK), are a transit peptide targeting the mitochondrion. The segment at 41–120 (RRKPARMALS…KDAADKKQDG (80 aa)) is disordered. Over residues 86–119 (RLPDRPIPRSDAELKRSSSDLNNKEKDAADKKQD) the composition is skewed to basic and acidic residues. Residues 151-184 (TSFDQFPLLPQVREAVYANAFPTLTEISPTPIQR) carry the Q motif motif. Residues 212-427 (EEELFHFDQF…EKKFPEMKRL (216 aa)) form the Helicase ATP-binding domain. 225–232 (AETGTGKT) is a binding site for ATP. Positions 374–377 (DEAD) match the DEAD box motif. In terms of domain architecture, Helicase C-terminal spans 438–624 (RVQLGVVDVD…EAMFRGQALI (187 aa)).

This sequence belongs to the DEAD box helicase family. MRH4 subfamily.

It localises to the mitochondrion. It catalyses the reaction ATP + H2O = ADP + phosphate + H(+). Functionally, ATP-binding RNA helicase involved in mitochondrial RNA metabolism. Required for maintenance of mitochondrial DNA. The protein is ATP-dependent RNA helicase MRH4, mitochondrial (MRH4) of Ajellomyces capsulatus (strain NAm1 / WU24) (Darling's disease fungus).